The following is a 288-amino-acid chain: Programmed cell death protein 1 (288 aa).

Positions 1-24 (MWVRQVPWSFTWAVLQLSWQSGWL) are cleaved as a signal peptide. At 25–169 (LEVPNGPWRS…PKPEGRFQGM (145 aa)) the chain is on the extracellular side. An Ig-like V-type domain is found at 31–139 (PWRSLTFYPA…PKAKIEESPG (109 aa)). Asn-49, Asn-58, Asn-74, and Asn-116 each carry an N-linked (GlcNAc...) asparagine glycan. A disulfide bridge connects residues Cys-54 and Cys-123. The interval 70 to 77 (LSPSNQTE) is interaction with CD274/PDCD1L1. A helical membrane pass occupies residues 170-190 (VIGIMSALVGIPVLLLLAWAL). Topologically, residues 191–288 (AVFCSTSMSE…HEDGHCSWPL (98 aa)) are cytoplasmic. The ITIM motif motif lies at 223 to 228 (VAYEEL). Tyr-225 carries the post-translational modification Phosphotyrosine. Lys-235 is covalently cross-linked (Glycyl lysine isopeptide (Lys-Gly) (interchain with G-Cter in ubiquitin)). The residue at position 236 (Thr-236) is a Phosphothreonine; by MAPK3. The ITSM motif signature appears at 247–251 (EYATI). The residue at position 248 (Tyr-248) is a Phosphotyrosine. The interval 263 to 288 (GRRGSADGLQGPRPPRHEDGHCSWPL) is disordered. Residues 277 to 288 (PRHEDGHCSWPL) are compositionally biased toward basic and acidic residues.

Monomer. Interacts with CD274/PDCD1L1. Interacts with CD273/PDCD1LG2. Interacts with FBXO38; leading to ubiquitination and degradation by the proteasome. Ubiquitinated at Lys-235 by the SCF(FBXO38) complex, leading to its proteasomal degradation. Ubiquitinated via 'Lys-48'-linked polyubiquitin chains. Deubiquitinated and thus stabilized by USP5. Post-translationally, tyrosine phosphorylated at Tyr-225 (within ITIM motif) and Tyr-248 (ITSM motif) upon ligand binding. Phosphorylation at Tyr-248 promotes the recruitment of the protein tyrosine phosphatase PTPN11/SHP-2 that mediates dephosphorylation of key TCR proximal signaling molecules, such as ZAP70, PRKCQ/PKCtheta and CD247/CD3zeta. Phosphorylation at Thr-236 promotes the recruitment of the deubiquitinase USP5. As to expression, thymus-specific.

Its subcellular location is the cell membrane. In terms of biological role, inhibitory receptor on antigen activated T-cells that plays a critical role in induction and maintenance of immune tolerance to self. Delivers inhibitory signals upon binding to ligands, such as CD274/PDCD1L1 and CD273/PDCD1LG2. Following T-cell receptor (TCR) engagement, PDCD1 associates with CD3-TCR in the immunological synapse and directly inhibits T-cell activation. Suppresses T-cell activation through the recruitment of PTPN11/SHP-2: following ligand-binding, PDCD1 is phosphorylated within the ITSM motif, leading to the recruitment of the protein tyrosine phosphatase PTPN11/SHP-2 that mediates dephosphorylation of key TCR proximal signaling molecules, such as ZAP70, PRKCQ/PKCtheta and CD247/CD3zeta. The PDCD1-mediated inhibitory pathway is exploited by tumors to attenuate anti-tumor immunity and facilitate tumor survival. The polypeptide is Programmed cell death protein 1 (Mus musculus (Mouse)).